The primary structure comprises 70 residues: uncharacterized protein (70 aa).

Residues 5–59 form the HTH cro/C1-type domain; it reads IREFRAKYGMTQEELAKKVGVRRETIVFLEKGKYNPSLRLAYKIARVFNARIEDL. A DNA-binding region (H-T-H motif) is located at residues 16-35; that stretch reads QEELAKKVGVRRETIVFLEK.

This is an uncharacterized protein from Archaeoglobus fulgidus (strain ATCC 49558 / DSM 4304 / JCM 9628 / NBRC 100126 / VC-16).